Consider the following 422-residue polypeptide: 3-phosphoshikimate 1-carboxyvinyltransferase (422 aa).

3-phosphoshikimate-binding residues include Lys24, Ser25, and Arg29. Residue Lys24 coordinates phosphoenolpyruvate. Phosphoenolpyruvate contacts are provided by Gly93 and Arg121. 3-phosphoshikimate-binding residues include Ser164, Ser165, Gln166, Glu308, and His335. Gln166 is a phosphoenolpyruvate binding site. The Proton acceptor role is filled by Glu308. Phosphoenolpyruvate contacts are provided by Arg339, Arg380, and Lys405.

This sequence belongs to the EPSP synthase family. Monomer.

The protein resides in the cytoplasm. It catalyses the reaction 3-phosphoshikimate + phosphoenolpyruvate = 5-O-(1-carboxyvinyl)-3-phosphoshikimate + phosphate. It participates in metabolic intermediate biosynthesis; chorismate biosynthesis; chorismate from D-erythrose 4-phosphate and phosphoenolpyruvate: step 6/7. Its function is as follows. Catalyzes the transfer of the enolpyruvyl moiety of phosphoenolpyruvate (PEP) to the 5-hydroxyl of shikimate-3-phosphate (S3P) to produce enolpyruvyl shikimate-3-phosphate and inorganic phosphate. The protein is 3-phosphoshikimate 1-carboxyvinyltransferase of Saccharopolyspora erythraea (strain ATCC 11635 / DSM 40517 / JCM 4748 / NBRC 13426 / NCIMB 8594 / NRRL 2338).